The following is a 141-amino-acid chain: Large ribosomal subunit protein bL17 (141 aa).

This sequence belongs to the bacterial ribosomal protein bL17 family. Part of the 50S ribosomal subunit. Contacts protein L32.

This is Large ribosomal subunit protein bL17 from Sinorhizobium medicae (strain WSM419) (Ensifer medicae).